The chain runs to 138 residues: Basic phospholipase A2 PL-Y (138 aa).

The signal sequence occupies residues 1-16 (MRTLWIMAVLLVGVEG). 7 disulfide bridges follow: C42-C131, C44-C60, C59-C111, C65-C138, C66-C104, C73-C97, and C91-C102. Ca(2+)-binding residues include Y43, G45, and G47. The active site involves H63. D64 contacts Ca(2+). Residue D105 is part of the active site.

It belongs to the phospholipase A2 family. Group II subfamily. D49 sub-subfamily. It depends on Ca(2+) as a cofactor. As to expression, expressed by the venom gland.

It is found in the secreted. It carries out the reaction a 1,2-diacyl-sn-glycero-3-phosphocholine + H2O = a 1-acyl-sn-glycero-3-phosphocholine + a fatty acid + H(+). Snake venom phospholipase A2 (PLA2) that can cleave arachidonate at the sn-2 position from phospholipides in the micellar state or in bilayer membranes. PLA2 catalyzes the calcium-dependent hydrolysis of the 2-acyl groups in 3-sn-phosphoglycerides. This Protobothrops flavoviridis (Habu) protein is Basic phospholipase A2 PL-Y.